A 250-amino-acid polypeptide reads, in one-letter code: Uracil-DNA glycosylase (250 aa).

The active-site Proton acceptor is Asp78.

Belongs to the uracil-DNA glycosylase (UDG) superfamily. UNG family.

The protein resides in the cytoplasm. The enzyme catalyses Hydrolyzes single-stranded DNA or mismatched double-stranded DNA and polynucleotides, releasing free uracil.. Its function is as follows. Excises uracil residues from the DNA which can arise as a result of misincorporation of dUMP residues by DNA polymerase or due to deamination of cytosine. This Albidiferax ferrireducens (strain ATCC BAA-621 / DSM 15236 / T118) (Rhodoferax ferrireducens) protein is Uracil-DNA glycosylase.